Consider the following 422-residue polypeptide: MRRYQFTSESVTEGHPDKVCDQISDAILDGILEKDPTARVACETLVKTGMAVVAGEITTSAWVDMPVVVRNTIKDIGYTDAAMGFDYETCAVLTAIEKQSPDISRGVTEGEGLFKEQGAGDQGLMFGYATDETSELMPSPISYAHRLARKLADLRKSKKLDWLRPDGKTQVTIEYEDQTPVRVSAVVVSTQHSPEVKHKTIVDAVRSLIIEKCIPAKLMDKSTKIYVNPTGRFVVGGPFGDAGLTGRKIIVDTYGGMGRHGGGAFSGKDPTKVDRSACYYARYVAKNVVASKLAARCEVQIAYAIGVAQPVGVHVNTFGTGRVGEDVLEKYIMQNFDMRPKAIIEQLDLLKPIYRKTAAYGHFGRDEFTWEKTDRAAKLAEDLLRPTLAAVPATTNGAGSKNGSGSKKEPKRKGKKETGAQA.

Histidine 15 is an ATP binding site. Aspartate 17 serves as a coordination point for Mg(2+). K(+) is bound at residue glutamate 43. L-methionine is bound by residues glutamate 56 and glutamine 99. The tract at residues 99-109 (QSPDISRGVTE) is flexible loop. Residues 166 to 168 (DGK), 232 to 233 (RF), aspartate 241, 247 to 248 (RK), alanine 264, and lysine 268 contribute to the ATP site. L-methionine is bound at residue aspartate 241. Lysine 272 serves as a coordination point for L-methionine. A disordered region spans residues 390 to 422 (AVPATTNGAGSKNGSGSKKEPKRKGKKETGAQA).

It belongs to the AdoMet synthase family. In terms of assembly, homotetramer; dimer of dimers. Requires Mg(2+) as cofactor. The cofactor is K(+).

It is found in the cytoplasm. The catalysed reaction is L-methionine + ATP + H2O = S-adenosyl-L-methionine + phosphate + diphosphate. Its pathway is amino-acid biosynthesis; S-adenosyl-L-methionine biosynthesis; S-adenosyl-L-methionine from L-methionine: step 1/1. In terms of biological role, catalyzes the formation of S-adenosylmethionine (AdoMet) from methionine and ATP. The overall synthetic reaction is composed of two sequential steps, AdoMet formation and the subsequent tripolyphosphate hydrolysis which occurs prior to release of AdoMet from the enzyme. The polypeptide is S-adenosylmethionine synthase (Sorangium cellulosum (strain So ce56) (Polyangium cellulosum (strain So ce56))).